We begin with the raw amino-acid sequence, 150 residues long: Transcriptional regulator MraZ (150 aa).

SpoVT-AbrB domains are found at residues 9–54 (QSIH…PPEE) and 83–126 (AEEC…NKST).

The protein belongs to the MraZ family. Forms oligomers.

Its subcellular location is the cytoplasm. The protein localises to the nucleoid. In Syntrophobacter fumaroxidans (strain DSM 10017 / MPOB), this protein is Transcriptional regulator MraZ.